A 61-amino-acid polypeptide reads, in one-letter code: Large ribosomal subunit protein uL30 (61 aa).

It belongs to the universal ribosomal protein uL30 family. In terms of assembly, part of the 50S ribosomal subunit.

This Neisseria gonorrhoeae (strain ATCC 700825 / FA 1090) protein is Large ribosomal subunit protein uL30.